The chain runs to 237 residues: UDP-2,3-diacylglucosamine hydrolase (237 aa).

Residues Asp-9, His-11, Asp-42, Asn-80, and His-115 each coordinate Mn(2+). Residue 80-81 (NR) participates in substrate binding. The substrate site is built by Asp-123, Ser-161, Lys-165, Lys-168, and His-196. Residues His-196 and His-198 each coordinate Mn(2+).

Belongs to the LpxH family. Mn(2+) serves as cofactor.

It is found in the cell inner membrane. It catalyses the reaction UDP-2-N,3-O-bis[(3R)-3-hydroxytetradecanoyl]-alpha-D-glucosamine + H2O = 2-N,3-O-bis[(3R)-3-hydroxytetradecanoyl]-alpha-D-glucosaminyl 1-phosphate + UMP + 2 H(+). Its pathway is glycolipid biosynthesis; lipid IV(A) biosynthesis; lipid IV(A) from (3R)-3-hydroxytetradecanoyl-[acyl-carrier-protein] and UDP-N-acetyl-alpha-D-glucosamine: step 4/6. Hydrolyzes the pyrophosphate bond of UDP-2,3-diacylglucosamine to yield 2,3-diacylglucosamine 1-phosphate (lipid X) and UMP by catalyzing the attack of water at the alpha-P atom. Involved in the biosynthesis of lipid A, a phosphorylated glycolipid that anchors the lipopolysaccharide to the outer membrane of the cell. This is UDP-2,3-diacylglucosamine hydrolase from Haemophilus influenzae (strain PittGG).